The sequence spans 413 residues: Tyrosine--tRNA ligase (413 aa).

The short motif at 59–68 is the 'HIGH' region element; the sequence is PTAPDIHLGH. The short motif at 243-247 is the 'KMSKS' region element; the sequence is KMSKS. Lys-246 is an ATP binding site. One can recognise an S4 RNA-binding domain in the interval 351 to 411; that stretch reads LAIGQLLKQA…GKRRFARVTL (61 aa).

Belongs to the class-I aminoacyl-tRNA synthetase family. TyrS type 2 subfamily. Homodimer.

The protein localises to the cytoplasm. It carries out the reaction tRNA(Tyr) + L-tyrosine + ATP = L-tyrosyl-tRNA(Tyr) + AMP + diphosphate + H(+). Functionally, catalyzes the attachment of tyrosine to tRNA(Tyr) in a two-step reaction: tyrosine is first activated by ATP to form Tyr-AMP and then transferred to the acceptor end of tRNA(Tyr). The protein is Tyrosine--tRNA ligase of Burkholderia mallei (strain ATCC 23344).